The sequence spans 447 residues: C4-dicarboxylate transport protein (447 aa).

The next 8 helical transmembrane spans lie at 22 to 42 (FQVI…PLVG), 52 to 72 (FINL…VTGI), 90 to 110 (AYFL…AHVV), 159 to 179 (GNIL…ASVG), 199 to 219 (LVHI…AFTI), 232 to 252 (WLVG…LGVV), 325 to 347 (LFIA…LLVA), and 366 to 386 (AATL…ILGV).

This sequence belongs to the dicarboxylate/amino acid:cation symporter (DAACS) (TC 2.A.23) family.

It is found in the cell inner membrane. Functionally, responsible for the transport of dicarboxylates such as succinate, fumarate, and malate from the periplasm across the membrane. The sequence is that of C4-dicarboxylate transport protein from Stenotrophomonas maltophilia (strain R551-3).